Consider the following 503-residue polypeptide: Glutamate--tRNA ligase (503 aa).

Residues 12 to 22 carry the 'HIGH' region motif; that stretch reads PSPTGYLHVGG. Positions 259–263 match the 'KMSKS' region motif; sequence KLSKR. Lys-262 contributes to the ATP binding site.

This sequence belongs to the class-I aminoacyl-tRNA synthetase family. Glutamate--tRNA ligase type 1 subfamily. As to quaternary structure, monomer.

It localises to the cytoplasm. The enzyme catalyses tRNA(Glu) + L-glutamate + ATP = L-glutamyl-tRNA(Glu) + AMP + diphosphate. Catalyzes the attachment of glutamate to tRNA(Glu) in a two-step reaction: glutamate is first activated by ATP to form Glu-AMP and then transferred to the acceptor end of tRNA(Glu). The chain is Glutamate--tRNA ligase from Chlorobaculum parvum (strain DSM 263 / NCIMB 8327) (Chlorobium vibrioforme subsp. thiosulfatophilum).